Consider the following 127-residue polypeptide: Translation initiation factor 5A (127 aa).

K35 is subject to Hypusine.

It belongs to the eIF-5A family.

The protein resides in the cytoplasm. Functionally, functions by promoting the formation of the first peptide bond. The polypeptide is Translation initiation factor 5A (Methanospirillum hungatei JF-1 (strain ATCC 27890 / DSM 864 / NBRC 100397 / JF-1)).